The primary structure comprises 103 residues: N(4)-acetylcytidine amidohydrolase (103 aa).

The ASCH domain maps to 7–93 (TFFERFEQDI…VIAEIYPGLE (87 aa)). The active-site Proton acceptor is the K21. Catalysis depends on T24, which acts as the Nucleophile. E74 (proton donor) is an active-site residue.

This sequence belongs to the N(4)-acetylcytidine amidohydrolase family.

It catalyses the reaction N(4)-acetylcytidine + H2O = cytidine + acetate + H(+). It carries out the reaction N(4)-acetyl-2'-deoxycytidine + H2O = 2'-deoxycytidine + acetate + H(+). The catalysed reaction is N(4)-acetylcytosine + H2O = cytosine + acetate + H(+). Functionally, catalyzes the hydrolysis of N(4)-acetylcytidine (ac4C). The sequence is that of N(4)-acetylcytidine amidohydrolase from Shewanella putrefaciens (strain CN-32 / ATCC BAA-453).